A 379-amino-acid polypeptide reads, in one-letter code: Chaperone protein DnaJ (379 aa).

One can recognise a J domain in the interval 5–70 (DYYETLEVSQ…QKRAAYDQYG (66 aa)). The CR-type zinc-finger motif lies at 135–213 (GKSLEIKVPT…CRGQGRVEKT (79 aa)). Positions 148, 151, 165, 168, 187, 190, 201, and 204 each coordinate Zn(2+). 4 CXXCXGXG motif repeats span residues 148-155 (CEPCDGSG), 165-172 (CSTCHGHG), 187-194 (CPTCSGKG), and 201-208 (CTSCRGQG).

This sequence belongs to the DnaJ family. As to quaternary structure, homodimer. Requires Zn(2+) as cofactor.

The protein localises to the cytoplasm. In terms of biological role, participates actively in the response to hyperosmotic and heat shock by preventing the aggregation of stress-denatured proteins and by disaggregating proteins, also in an autonomous, DnaK-independent fashion. Unfolded proteins bind initially to DnaJ; upon interaction with the DnaJ-bound protein, DnaK hydrolyzes its bound ATP, resulting in the formation of a stable complex. GrpE releases ADP from DnaK; ATP binding to DnaK triggers the release of the substrate protein, thus completing the reaction cycle. Several rounds of ATP-dependent interactions between DnaJ, DnaK and GrpE are required for fully efficient folding. Also involved, together with DnaK and GrpE, in the DNA replication of plasmids through activation of initiation proteins. This chain is Chaperone protein DnaJ, found in Colwellia maris.